We begin with the raw amino-acid sequence, 547 residues long: Dihydrolipoyllysine-residue acetyltransferase component of pyruvate dehydrogenase complex (547 aa).

One can recognise a Lipoyl-binding 1 domain in the interval 2–75 (SELIRVPDIG…KEGDEILELE (74 aa)). Residue Lys-41 is modified to N6-lipoyllysine. The disordered stretch occupies residues 75–117 (EVEGGEQPAEAKAEAAPAQPEAPKAEAPAPAPSESKPAAPAAA). The span at 80-117 (EQPAEAKAEAAPAQPEAPKAEAPAPAPSESKPAAPAAA) shows a compositional bias: low complexity. Residues 119–193 (VQDIKVPDIG…GTGDLILKLK (75 aa)) form the Lipoyl-binding 2 domain. At Lys-159 the chain carries N6-lipoyllysine. Residues 202 to 231 (EEQPAAAPAQAAAPAAEQKPAAAAPAPAKA) show a composition bias toward low complexity. The disordered stretch occupies residues 202-248 (EEQPAAAPAQAAAPAAEQKPAAAAPAPAKADTPAPVGAPSRDGAKVH). Positions 248-285 (HAGPAVRMLAREFGVELSEVKASGPKGRILKEDVQVFV) constitute a Peripheral subunit-binding (PSBD) domain. The active site involves His-520.

The protein belongs to the 2-oxoacid dehydrogenase family. In terms of assembly, forms a 24-polypeptide structural core with octahedral symmetry. It depends on (R)-lipoate as a cofactor.

The enzyme catalyses N(6)-[(R)-dihydrolipoyl]-L-lysyl-[protein] + acetyl-CoA = N(6)-[(R)-S(8)-acetyldihydrolipoyl]-L-lysyl-[protein] + CoA. The pyruvate dehydrogenase complex catalyzes the overall conversion of pyruvate to acetyl-CoA and CO(2). It contains multiple copies of three enzymatic components: pyruvate dehydrogenase (E1), dihydrolipoamide acetyltransferase (E2) and lipoamide dehydrogenase (E3). The protein is Dihydrolipoyllysine-residue acetyltransferase component of pyruvate dehydrogenase complex (aceF) of Pseudomonas aeruginosa (strain ATCC 15692 / DSM 22644 / CIP 104116 / JCM 14847 / LMG 12228 / 1C / PRS 101 / PAO1).